Consider the following 373-residue polypeptide: D-amino-acid transaminase, chloroplastic (373 aa).

Residues 1-57 constitute a chloroplast transit peptide; that stretch reads MAGLSLEFTVNTWNLRSLSQVPCPLRHGFRFPRRLTRRRTILMCSDSSSQSWNVPVL. Arginine 128 contributes to the pyridoxal 5'-phosphate binding site. The active-site Proton acceptor is the lysine 222. At lysine 222 the chain carries N6-(pyridoxal phosphate)lysine. Pyridoxal 5'-phosphate is bound at residue glutamate 255.

It belongs to the class-IV pyridoxal-phosphate-dependent aminotransferase family. In terms of assembly, homodimer. Requires pyridoxal 5'-phosphate as cofactor.

The protein resides in the plastid. It is found in the chloroplast. The enzyme catalyses D-alanine + 2-oxoglutarate = D-glutamate + pyruvate. It carries out the reaction 4-amino-4-deoxychorismate = 4-aminobenzoate + pyruvate + H(+). The protein operates within cofactor biosynthesis; tetrahydrofolate biosynthesis; 4-aminobenzoate from chorismate: step 2/2. Its activity is regulated as follows. Inhibited by hydroxylamine or amino-oxyacetic acid. Functionally, amino acid aminotransferase showing activity for D-Asp and D-Ala as amino donors with 2-oxoglutarate as an amino acceptor. Can also use D-Met, D-Tyr, D-Phe, D-Gln, D-Trp and D-Asn as substrates, but no activity with L-Asp, L-Ala, L-Leu, L-Ile or L-Val. Also catalyzes the reverse reaction where an amino group is transferred from D-Glu to pyruvate or oxaloacetate to produce D-Ala or D-Asp, respectively. Also involved in folate biosynthesis, acting as an aminodeoxychorismate lyase converting 4-amino-4-deoxychorismate (ADC) to p-aminobenzoate (PABA). This is D-amino-acid transaminase, chloroplastic from Arabidopsis thaliana (Mouse-ear cress).